The following is a 554-amino-acid chain: Zinc finger protein 426 (554 aa).

Positions valine 42–methionine 112 constitute a KRAB domain. A C2H2-type 1; atypical zinc finger spans residues cysteine 146 to histidine 174. 11 C2H2-type zinc fingers span residues phenylalanine 224–histidine 246, tyrosine 280–histidine 302, tyrosine 308–histidine 330, tyrosine 336–histidine 358, tyrosine 364–histidine 386, phenylalanine 392–histidine 414, cysteine 420–histidine 442, tyrosine 448–histidine 470, tyrosine 476–histidine 498, tyrosine 504–histidine 526, and tyrosine 532–histidine 554.

The protein resides in the nucleus. In terms of biological role, may be involved in transcriptional regulation. This Homo sapiens (Human) protein is Zinc finger protein 426 (ZNF426).